The following is a 119-amino-acid chain: MYVRFEVPEDMQNEALSLLEKVRESGKVKKGTNETTKAVERGLAKLVYIAEDVDPPEIVAHLPLLCEEKNVPYIYVKSKNDLGRAVGIEVPCASAAIINEGELRKELGSLVEKIKGLQK.

Belongs to the eukaryotic ribosomal protein eL8 family. Part of the 50S ribosomal subunit. Probably part of the RNase P complex.

The protein localises to the cytoplasm. Multifunctional RNA-binding protein that recognizes the K-turn motif in ribosomal RNA, the RNA component of RNase P, box H/ACA, box C/D and box C'/D' sRNAs. This chain is Large ribosomal subunit protein eL8, found in Archaeoglobus fulgidus (strain ATCC 49558 / DSM 4304 / JCM 9628 / NBRC 100126 / VC-16).